The chain runs to 507 residues: Steroid 17-alpha-hydroxylase/17,20 lyase (507 aa).

Cys-441 contributes to the heme binding site.

Belongs to the cytochrome P450 family. Requires heme as cofactor.

It is found in the endoplasmic reticulum membrane. The protein resides in the microsome membrane. It catalyses the reaction a C21-steroid + reduced [NADPH--hemoprotein reductase] + O2 = a 17alpha-hydroxy-C21-steroid + oxidized [NADPH--hemoprotein reductase] + H2O + H(+). It carries out the reaction progesterone + reduced [NADPH--hemoprotein reductase] + O2 = 17alpha-hydroxyprogesterone + oxidized [NADPH--hemoprotein reductase] + H2O + H(+). The catalysed reaction is pregnenolone + reduced [NADPH--hemoprotein reductase] + O2 = 17alpha-hydroxypregnenolone + oxidized [NADPH--hemoprotein reductase] + H2O + H(+). The enzyme catalyses 17alpha-hydroxyprogesterone + reduced [NADPH--hemoprotein reductase] + O2 = androst-4-ene-3,17-dione + acetate + oxidized [NADPH--hemoprotein reductase] + H2O + 2 H(+). It catalyses the reaction 17alpha-hydroxyprogesterone + reduced [NADPH--hemoprotein reductase] + O2 = 16alpha,17alpha-dihydroxyprogesterone + oxidized [NADPH--hemoprotein reductase] + H2O + H(+). It carries out the reaction 16alpha,17alpha-dihydroxyprogesterone + reduced [NADPH--hemoprotein reductase] + O2 = 6beta,16alpha,17alpha-trihydroxyprogesterone + oxidized [NADPH--hemoprotein reductase] + H2O + H(+). The catalysed reaction is 17alpha-hydroxypregnenolone + reduced [NADPH--hemoprotein reductase] + O2 = 3beta-hydroxyandrost-5-en-17-one + acetate + oxidized [NADPH--hemoprotein reductase] + H2O + 2 H(+). The enzyme catalyses 16alpha,17alpha-dihydroxypregnenolone + reduced [NADPH--hemoprotein reductase] + O2 = 3beta,16alpha-dihydroxy-androst-5-en-17-one + acetate + oxidized [NADPH--hemoprotein reductase] + H2O + 2 H(+). It catalyses the reaction 3beta-hydroxyandrost-5-en-17-one + reduced [NADPH--hemoprotein reductase] + O2 = 3beta,16alpha-dihydroxy-androst-5-en-17-one + oxidized [NADPH--hemoprotein reductase] + H2O + H(+). It carries out the reaction androst-4-ene-3,17-dione + reduced [NADPH--hemoprotein reductase] + O2 = 16alpha-hydroxyandrost-4-ene-3,17-dione + oxidized [NADPH--hemoprotein reductase] + H2O + H(+). The protein operates within steroid hormone biosynthesis. Its pathway is steroid biosynthesis; glucocorticoid biosynthesis. With respect to regulation, regulated predominantly by intracellular cAMP levels. The 17,20-lyase activity is stimulated by cytochrome b5, which acts as an allosteric effector increasing the Vmax of the lyase activity. Its function is as follows. A cytochrome P450 monooxygenase involved in corticoid and androgen biosynthesis. Catalyzes 17-alpha hydroxylation of C21 steroids, which is common for both pathways. A second oxidative step, required only for androgen synthesis, involves an acyl-carbon cleavage. The 17-alpha hydroxy intermediates, as part of adrenal glucocorticoids biosynthesis pathway, are precursors of cortisol. Hydroxylates steroid hormones, pregnenolone and progesterone to form 17-alpha hydroxy metabolites, followed by the cleavage of the C17-C20 bond to form C19 steroids, dehydroepiandrosterone (DHEA) and androstenedione. Has 16-alpha hydroxylase activity. Catalyzes 16-alpha hydroxylation of 17-alpha hydroxy pregnenolone, followed by the cleavage of the C17-C20 bond to form 16-alpha-hydroxy DHEA. Also 16-alpha hydroxylates androgens, relevant for estriol synthesis. Mechanistically, uses molecular oxygen inserting one oxygen atom into a substrate, and reducing the second into a water molecule, with two electrons provided by NADPH via cytochrome P450 reductase (CPR; NADPH-ferrihemoprotein reductase). The sequence is that of Steroid 17-alpha-hydroxylase/17,20 lyase (Cyp17a1) from Rattus norvegicus (Rat).